A 213-amino-acid polypeptide reads, in one-letter code: Succinate dehydrogenase subunit 3-1, mitochondrial (213 aa).

Residues Met-1 to Phe-105 constitute a mitochondrion transit peptide. Position 130 (His-130) interacts with heme. A helical membrane pass occupies residues Ile-148–Leu-165.

Component of complex II composed of eight subunits in plants: four classical SDH subunits SDH1, SDH2, SDH3 and SDH4 (a flavoprotein (FP), an iron-sulfur protein (IP), and a cytochrome b composed of a large and a small subunit.), as well as four subunits unknown in mitochondria from bacteria and heterotrophic eukaryotes. It depends on heme as a cofactor. Expressed in flowers, inflorescences and stems.

It is found in the mitochondrion inner membrane. Its pathway is carbohydrate metabolism; tricarboxylic acid cycle. Functionally, membrane-anchoring subunit of succinate dehydrogenase (SDH). This chain is Succinate dehydrogenase subunit 3-1, mitochondrial, found in Arabidopsis thaliana (Mouse-ear cress).